Here is a 91-residue protein sequence, read N- to C-terminus: Sec-independent protein translocase protein TatA (91 aa).

Residues Met1–Gly21 traverse the membrane as a helical segment. Positions Ala42–Val91 are disordered. The span at Glu51–Pro64 shows a compositional bias: low complexity. A compositionally biased stretch (basic and acidic residues) spans Gln78 to Val91.

Belongs to the TatA/E family. As to quaternary structure, the Tat system comprises two distinct complexes: a TatABC complex, containing multiple copies of TatA, TatB and TatC subunits, and a separate TatA complex, containing only TatA subunits. Substrates initially bind to the TatABC complex, which probably triggers association of the separate TatA complex to form the active translocon.

The protein localises to the cell inner membrane. Part of the twin-arginine translocation (Tat) system that transports large folded proteins containing a characteristic twin-arginine motif in their signal peptide across membranes. TatA could form the protein-conducting channel of the Tat system. The sequence is that of Sec-independent protein translocase protein TatA from Pseudomonas syringae pv. tomato (strain ATCC BAA-871 / DC3000).